We begin with the raw amino-acid sequence, 288 residues long: Hyaluronidase (288 aa).

N-linked (GlcNAc...) asparagine glycosylation occurs at Asn36. Glu66 (proton donor) is an active-site residue. Cys142 and Cys154 are joined by a disulfide. Asn282 is a glycosylation site (N-linked (GlcNAc...) asparagine).

This sequence belongs to the glycosyl hydrolase 56 family. In terms of tissue distribution, expressed by the venom gland.

Its subcellular location is the secreted. The catalysed reaction is Random hydrolysis of (1-&gt;4)-linkages between N-acetyl-beta-D-glucosamine and D-glucuronate residues in hyaluronate.. Functionally, hydrolyzes high molecular weight hyaluronic acid to produce small oligosaccharides. This is Hyaluronidase from Polybia paulista (Neotropical social wasp).